We begin with the raw amino-acid sequence, 135 residues long: uncharacterized protein (135 aa).

The disordered stretch occupies residues 100 to 125 (KESPATSSEDISSCSDCDSERLQSDD). The segment covering 106-115 (SSEDISSCSD) has biased composition (low complexity).

This is an uncharacterized protein from Microplitis demolitor (Parasitoid wasp).